A 1736-amino-acid chain; its full sequence is Hybrid signal transduction histidine kinase I (1736 aa).

Over residues His-143–Asn-161 the composition is skewed to low complexity. The interval His-143–Ser-171 is disordered. A PAC domain is found at Phe-234–Glu-286. The PAS domain occupies Glu-287–Pro-358. The disordered stretch occupies residues Thr-378–Thr-469. A compositionally biased stretch (low complexity) spans Ser-379–Ser-389. Positions Pro-392–Tyr-412 are enriched in polar residues. Over residues Ser-413 to Thr-469 the composition is skewed to low complexity. The Histidine kinase domain occupies Asn-556 to Ser-908. His-559 carries the post-translational modification Phosphohistidine; by autocatalysis. Disordered stretches follow at residues Asn-711–Lys-821, Thr-952–Gly-971, Asn-1080–Ser-1124, Pro-1157–Pro-1258, Ser-1277–Gly-1301, Ala-1330–Ser-1393, and Ser-1419–Leu-1520. Composition is skewed to acidic residues over residues Ser-725–Asn-735 and Glu-758–Thr-789. 3 stretches are compositionally biased toward low complexity: residues Ser-790–Asn-807, Asp-961–Gly-971, and Asn-1080–Ile-1096. The segment covering Gln-1097–Lys-1117 has biased composition (polar residues). Low complexity-rich tracts occupy residues Ser-1186–Ser-1195 and Thr-1202–Pro-1258. The segment covering Ala-1330–Gly-1339 has biased composition (polar residues). Low complexity-rich tracts occupy residues Tyr-1340–Gln-1376, Asn-1425–Glu-1475, Ser-1482–Ser-1492, and Ser-1506–Leu-1520. Residues Lys-1551–Ile-1674 enclose the Response regulatory domain. Asp-1605 carries the post-translational modification 4-aspartylphosphate. Residues Asn-1695–Ile-1722 show a composition bias toward low complexity. Residues Asn-1695–Ile-1736 form a disordered region.

Activation probably requires transfer of a phosphate group between a histidine in the kinase core (transmitter) domain and an aspartate of the receiver domain.

It carries out the reaction ATP + protein L-histidine = ADP + protein N-phospho-L-histidine.. Acts as a receptor histidine kinase for a signal transduction pathway. This protein undergoes an ATP-dependent autophosphorylation at a conserved histidine residue in the kinase core, and a phosphoryl group is then transferred to a conserved aspartate residue in the receiver domain. The sequence is that of Hybrid signal transduction histidine kinase I (dhkI-1) from Dictyostelium discoideum (Social amoeba).